A 595-amino-acid polypeptide reads, in one-letter code: Merlin (595 aa).

The residue at position 13 (Ser13) is a Phosphoserine. The 290-residue stretch at 22 to 311 (FTVRIVTMDA…GNHDLFMRRR (290 aa)) folds into the FERM domain. Ser518 carries the phosphoserine; by PAK modification.

Interacts with NHERF1, HGS and AGAP2. Interacts with LAYN. Interacts with SGSM3. Interacts (via FERM domain) with MPP1. Interacts with WWC1. Interacts with the CUL4A-RBX1-DDB1-VprBP/DCAF1 E3 ubiquitin-protein ligase complex. The unphosphorylated form interacts (via FERM domain) with VPRBP/DCAF1. Interacts (via FERM domain) with NOP53; the interaction is direct. Interacts with SCHIP1; the interaction is direct. In terms of processing, phosphorylation of Ser-518 inhibits nuclear localization by disrupting the intramolecular association of the FERM domain with the C-terminal tail. The dephosphorylation of Ser-518 favors the interaction with NOP53. Post-translationally, ubiquitinated by the CUL4A-RBX1-DDB1-DCAF1/VprBP E3 ubiquitin-protein ligase complex for ubiquitination and subsequent proteasome-dependent degradation. Widely expressed. Isoform 1 and isoform 3 are predominant. Isoform 4, isoform 5 and isoform 6 are expressed moderately. Isoform 8 is found at low frequency. Isoform 7, isoform 9 and isoform 10 are not expressed in adult tissues, with the exception of adult retina expressing isoform 10. Isoform 9 is faintly expressed in fetal brain, heart, lung, skeletal muscle and spleen. Fetal thymus expresses isoforms 1, 7, 9 and 10 at similar levels.

The protein localises to the cell projection. It localises to the filopodium membrane. It is found in the ruffle membrane. The protein resides in the nucleus. Its subcellular location is the cytoplasm. The protein localises to the perinuclear region. It localises to the cytoplasmic granule. It is found in the cytoskeleton. Functionally, probable regulator of the Hippo/SWH (Sav/Wts/Hpo) signaling pathway, a signaling pathway that plays a pivotal role in tumor suppression by restricting proliferation and promoting apoptosis. Along with WWC1 can synergistically induce the phosphorylation of LATS1 and LATS2 and can probably function in the regulation of the Hippo/SWH (Sav/Wts/Hpo) signaling pathway. May act as a membrane stabilizing protein. May inhibit PI3 kinase by binding to AGAP2 and impairing its stimulating activity. Suppresses cell proliferation and tumorigenesis by inhibiting the CUL4A-RBX1-DDB1-VprBP/DCAF1 E3 ubiquitin-protein ligase complex. The protein is Merlin (NF2) of Homo sapiens (Human).